The sequence spans 293 residues: Probable rRNA-processing protein EBP2 homolog (293 aa).

Residues 1–37 are compositionally biased toward acidic residues; sequence MSLEEDIVSDDEMNMIDEDDATDSEAESLSDSDTENE. 2 disordered regions span residues 1-45 and 150-293; these read MSLE…LAEP and IEES…RQKR. Residues 135-190 are a coiled coil; it reads HMEKVKSRLLHEKKQIEESEERRKARDNKRMAKEVQSQKMKERAKEKKDNIESVKK. Basic and acidic residues-rich tracts occupy residues 150-167, 173-189, and 247-256; these read IEES…RMAK, KMKE…ESVK, and KKREFRDSKF. The span at 265–275 shows a compositional bias: polar residues; the sequence is SKQNTAETTND.

This sequence belongs to the EBP2 family. Interacts with NSN1.

It localises to the nucleus. It is found in the nucleolus. In terms of biological role, required for the processing of the 27S pre-rRNA. Plays an important role in plant growth and senescence by modulating ribosome biogenesis in nucleolus. Associates with ribosomes. The chain is Probable rRNA-processing protein EBP2 homolog from Arabidopsis thaliana (Mouse-ear cress).